A 151-amino-acid chain; its full sequence is Putative pre-16S rRNA nuclease (151 aa).

The protein belongs to the YqgF nuclease family.

It localises to the cytoplasm. Its function is as follows. Could be a nuclease involved in processing of the 5'-end of pre-16S rRNA. The polypeptide is Putative pre-16S rRNA nuclease (Prochlorococcus marinus (strain MIT 9515)).